The chain runs to 217 residues: MSSLSESAILVRDALVARGLETPMKENGVSREEKKERIEEHMREILTLLSLDLSDDSLEETPHRIAKMYVDEIFSGLDYANFPKITVIENKMNCDEMVRVNDITLTSTCEHHLVTIDGKATVAYIPRGKIIGLSKINRIVRFFAQRPQVQERMTQQILVALQTLLGSDDVAITMEATHYCVKSRGVMDATSSTTTTALGGIFKRNPATRHEFLSGIR.

Cys109, His112, and Cys180 together coordinate Zn(2+).

This sequence belongs to the GTP cyclohydrolase I family. Toroid-shaped homodecamer, composed of two pentamers of five dimers.

The catalysed reaction is GTP + H2O = 7,8-dihydroneopterin 3'-triphosphate + formate + H(+). Its pathway is cofactor biosynthesis; 7,8-dihydroneopterin triphosphate biosynthesis; 7,8-dihydroneopterin triphosphate from GTP: step 1/1. The polypeptide is GTP cyclohydrolase 1 (Aliivibrio fischeri (strain ATCC 700601 / ES114) (Vibrio fischeri)).